Consider the following 630-residue polypeptide: Arginine--tRNA ligase (630 aa).

The short motif at 120 to 130 is the 'HIGH' region element; the sequence is ANPIHPLHIGH.

This sequence belongs to the class-I aminoacyl-tRNA synthetase family.

The protein localises to the cytoplasm. It carries out the reaction tRNA(Arg) + L-arginine + ATP = L-arginyl-tRNA(Arg) + AMP + diphosphate. This Pyrobaculum arsenaticum (strain DSM 13514 / JCM 11321 / PZ6) protein is Arginine--tRNA ligase.